Here is a 240-residue protein sequence, read N- to C-terminus: Uridylate kinase (240 aa).

Residue Lys14–Gly17 coordinates ATP. Position 56 (Gly56) interacts with UMP. ATP-binding residues include Gly57 and Arg61. Residues Asp76 and Thr137–Thr144 contribute to the UMP site. Residues Thr164, Tyr170, and Asp173 each contribute to the ATP site.

The protein belongs to the UMP kinase family. In terms of assembly, homohexamer.

The protein resides in the cytoplasm. The enzyme catalyses UMP + ATP = UDP + ADP. It participates in pyrimidine metabolism; CTP biosynthesis via de novo pathway; UDP from UMP (UMPK route): step 1/1. With respect to regulation, inhibited by UTP. Its function is as follows. Catalyzes the reversible phosphorylation of UMP to UDP. The protein is Uridylate kinase of Acidovorax sp. (strain JS42).